A 360-amino-acid polypeptide reads, in one-letter code: Pyrimidine monooxygenase RutA (360 aa).

FMN is bound by residues 49 to 50 (IK), N115, E124, 140 to 141 (RY), and S190.

This sequence belongs to the NtaA/SnaA/DszA monooxygenase family. RutA subfamily.

The enzyme catalyses uracil + FMNH2 + NADH + O2 = (Z)-3-ureidoacrylate + FMN + NAD(+) + H2O + H(+). The catalysed reaction is thymine + FMNH2 + NADH + O2 = (Z)-2-methylureidoacrylate + FMN + NAD(+) + H2O + H(+). Catalyzes the pyrimidine ring opening between N-3 and C-4 by an unusual flavin hydroperoxide-catalyzed mechanism, adding oxygen atoms in the process to yield ureidoacrylate peracid, that immediately reacts with FMN forming ureidoacrylate and FMN-N(5)-oxide. The FMN-N(5)-oxide reacts spontaneously with NADH to produce FMN. Requires the flavin reductase RutF to regenerate FMN in vivo. This Pseudomonas savastanoi pv. phaseolicola (strain 1448A / Race 6) (Pseudomonas syringae pv. phaseolicola (strain 1448A / Race 6)) protein is Pyrimidine monooxygenase RutA.